Consider the following 438-residue polypeptide: Glutamyl-tRNA reductase (438 aa).

Residues 55–58 (TCNR), Ser118, 123–125 (ETQ), and Gln129 contribute to the substrate site. Cys56 serves as the catalytic Nucleophile. 198–203 (GAGDMI) contacts NADP(+).

The protein belongs to the glutamyl-tRNA reductase family. As to quaternary structure, homodimer.

It catalyses the reaction (S)-4-amino-5-oxopentanoate + tRNA(Glu) + NADP(+) = L-glutamyl-tRNA(Glu) + NADPH + H(+). Its pathway is porphyrin-containing compound metabolism; protoporphyrin-IX biosynthesis; 5-aminolevulinate from L-glutamyl-tRNA(Glu): step 1/2. In terms of biological role, catalyzes the NADPH-dependent reduction of glutamyl-tRNA(Glu) to glutamate 1-semialdehyde (GSA). This is Glutamyl-tRNA reductase from Polynucleobacter asymbioticus (strain DSM 18221 / CIP 109841 / QLW-P1DMWA-1) (Polynucleobacter necessarius subsp. asymbioticus).